The sequence spans 441 residues: Ribulose bisphosphate carboxylase large chain (441 aa).

At K4 the chain carries N6,N6,N6-trimethyllysine. Positions 113 and 163 each coordinate substrate. K165 serves as the catalytic Proton acceptor. K167 is a substrate binding site. Residues K191, D193, and E194 each coordinate Mg(2+). An N6-carboxylysine modification is found at K191. H284 acts as the Proton acceptor in catalysis. Substrate contacts are provided by R285, H317, and S369.

It belongs to the RuBisCO large chain family. Type I subfamily. As to quaternary structure, heterohexadecamer of 8 large chains and 8 small chains; disulfide-linked. The disulfide link is formed within the large subunit homodimers. Mg(2+) is required as a cofactor. In terms of processing, the disulfide bond which can form in the large chain dimeric partners within the hexadecamer appears to be associated with oxidative stress and protein turnover.

Its subcellular location is the plastid. The protein localises to the chloroplast. It catalyses the reaction 2 (2R)-3-phosphoglycerate + 2 H(+) = D-ribulose 1,5-bisphosphate + CO2 + H2O. It carries out the reaction D-ribulose 1,5-bisphosphate + O2 = 2-phosphoglycolate + (2R)-3-phosphoglycerate + 2 H(+). Its function is as follows. RuBisCO catalyzes two reactions: the carboxylation of D-ribulose 1,5-bisphosphate, the primary event in carbon dioxide fixation, as well as the oxidative fragmentation of the pentose substrate in the photorespiration process. Both reactions occur simultaneously and in competition at the same active site. The protein is Ribulose bisphosphate carboxylase large chain of Darlingtonia californica (California pitcher plant).